Consider the following 267-residue polypeptide: Mediator of RNA polymerase II transcription subunit 18 (267 aa).

Belongs to the Mediator complex subunit 18 family. As to quaternary structure, component of the Mediator complex.

The protein resides in the nucleus. Component of the Mediator complex, a coactivator involved in the regulated transcription of nearly all RNA polymerase II-dependent genes. Mediator functions as a bridge to convey information from gene-specific regulatory proteins to the basal RNA polymerase II transcription machinery. Mediator is recruited to promoters by direct interactions with regulatory proteins and serves as a scaffold for the assembly of a functional preinitiation complex with RNA polymerase II and the general transcription factors. The sequence is that of Mediator of RNA polymerase II transcription subunit 18 (SRB5) from Coccidioides immitis (strain RS) (Valley fever fungus).